The chain runs to 402 residues: 1-deoxy-D-xylulose 5-phosphate reductoisomerase (402 aa).

Residues threonine 10, glycine 11, serine 12, isoleucine 13, asparagine 38, and asparagine 124 each coordinate NADPH. Lysine 125 serves as a coordination point for 1-deoxy-D-xylulose 5-phosphate. An NADPH-binding site is contributed by glutamate 126. A Mn(2+)-binding site is contributed by aspartate 150. 1-deoxy-D-xylulose 5-phosphate-binding residues include serine 151, glutamate 152, serine 186, and histidine 209. Glutamate 152 is a Mn(2+) binding site. An NADPH-binding site is contributed by glycine 215. 1-deoxy-D-xylulose 5-phosphate is bound by residues serine 222, asparagine 227, lysine 228, and glutamate 231. Glutamate 231 serves as a coordination point for Mn(2+).

The protein belongs to the DXR family. Mg(2+) is required as a cofactor. The cofactor is Mn(2+).

It carries out the reaction 2-C-methyl-D-erythritol 4-phosphate + NADP(+) = 1-deoxy-D-xylulose 5-phosphate + NADPH + H(+). It participates in isoprenoid biosynthesis; isopentenyl diphosphate biosynthesis via DXP pathway; isopentenyl diphosphate from 1-deoxy-D-xylulose 5-phosphate: step 1/6. Its function is as follows. Catalyzes the NADPH-dependent rearrangement and reduction of 1-deoxy-D-xylulose-5-phosphate (DXP) to 2-C-methyl-D-erythritol 4-phosphate (MEP). The sequence is that of 1-deoxy-D-xylulose 5-phosphate reductoisomerase from Vibrio vulnificus (strain YJ016).